A 134-amino-acid chain; its full sequence is Small ribosomal subunit protein bS6 (134 aa).

Positions 97–134 (TDVSPIKASEGREDRRSAPQREERNHDNSDEVSEESED) are disordered. A compositionally biased stretch (basic and acidic residues) spans 105-125 (SEGREDRRSAPQREERNHDNS).

It belongs to the bacterial ribosomal protein bS6 family.

Its function is as follows. Binds together with bS18 to 16S ribosomal RNA. In Marinomonas sp. (strain MWYL1), this protein is Small ribosomal subunit protein bS6.